Consider the following 145-residue polypeptide: Deoxyuridine 5'-triphosphate nucleotidohydrolase (145 aa).

Residues 65-67 (RSG), Asn78, 82-84 (TID), and Lys92 contribute to the substrate site.

The protein belongs to the dUTPase family. Requires Mg(2+) as cofactor.

The enzyme catalyses dUTP + H2O = dUMP + diphosphate + H(+). Its pathway is pyrimidine metabolism; dUMP biosynthesis; dUMP from dCTP (dUTP route): step 2/2. This enzyme is involved in nucleotide metabolism: it produces dUMP, the immediate precursor of thymidine nucleotides and it decreases the intracellular concentration of dUTP so that uracil cannot be incorporated into DNA. This is Deoxyuridine 5'-triphosphate nucleotidohydrolase from Syntrophomonas wolfei subsp. wolfei (strain DSM 2245B / Goettingen).